A 218-amino-acid polypeptide reads, in one-letter code: MFEYLIKFSPKILFIVEGTLITLKYSVIAVIFGLVIGVLLALCKVNKNRALRLFADFYTSIFRGTPLLIQLSIIYFASPYLIGIKFTVFMAGAISFSLNSGAYVSEVIRAGINAVDKGQFEAAEALAIPKFLIMKDIILPQAIKNIFPSLTNELINLIKESAIISMFGEMDLMKRAQIVSLETYNYFFPMIVAACCYYILVMLISFIARIIEKKLIVS.

The region spanning 19–208 (TLITLKYSVI…ILVMLISFIA (190 aa)) is the ABC transmembrane type-1 domain. 4 helical membrane passes run 25–45 (YSVIAVIFGLVIGVLLALCKV), 57–79 (FYTSIFRGTPLLIQLSIIYFASP), 86–108 (FTVFMAGAISFSLNSGAYVSEVI), and 187–207 (FFPMIVAACCYYILVMLISFI).

The protein belongs to the binding-protein-dependent transport system permease family. HisMQ subfamily.

The protein resides in the cell inner membrane. Functionally, part of the binding-protein-dependent transport system for glutamine; probably responsible for the translocation of the substrate across the membrane. The sequence is that of Putative glutamine transport system permease protein GlnP (glnP) from Rickettsia bellii (strain RML369-C).